The sequence spans 128 residues: Small ribosomal subunit protein uS14m (128 aa).

This sequence belongs to the universal ribosomal protein uS14 family. In terms of assembly, component of the mitochondrial small ribosomal subunit (mt-SSU). Mature mammalian 55S mitochondrial ribosomes consist of a small (28S) and a large (39S) subunit. The 28S small subunit contains a 12S ribosomal RNA (12S mt-rRNA) and 30 different proteins. The 39S large subunit contains a 16S rRNA (16S mt-rRNA), a copy of mitochondrial valine transfer RNA (mt-tRNA(Val)), which plays an integral structural role, and 52 different proteins. Interacts with LIAT1.

The protein localises to the mitochondrion. The polypeptide is Small ribosomal subunit protein uS14m (Homo sapiens (Human)).